Reading from the N-terminus, the 251-residue chain is Probable ATP-dependent transporter ycf16 (251 aa).

The ABC transporter domain occupies 6-250 (LEIKDLYASV…EKHGYDWITQ (245 aa)). 38-45 (GPNGSGKS) serves as a coordination point for ATP.

It belongs to the ABC transporter superfamily. Ycf16 family.

The protein localises to the plastid. It is found in the chloroplast. This chain is Probable ATP-dependent transporter ycf16 (ycf16), found in Pyropia yezoensis (Susabi-nori).